Reading from the N-terminus, the 76-residue chain is UPF0346 protein LBUL_1194 (76 aa).

It belongs to the UPF0346 family.

The chain is UPF0346 protein LBUL_1194 from Lactobacillus delbrueckii subsp. bulgaricus (strain ATCC BAA-365 / Lb-18).